The following is a 575-amino-acid chain: Serine/threonine-protein kinase Pink1, mitochondrial (575 aa).

The transit peptide at 1–51 (MSLLAYTNLLLQNGRIFRYYKKANIKKFIKKIIKLDLKSTPSEASVSRQTF) directs the protein to the mitochondrion. The Mitochondrial intermembrane segment spans residues 52–94 (LSTGLNSVKNAVQLQARKLLINNVLERVTPTLNSDLKKKAAKR). A helical membrane pass occupies residues 95–118 (LFYGDSAPFFALVGVSLASGSGLL). Residues 119–575 (TKDDELEGIC…KWIQELHIYN (457 aa)) lie on the Cytoplasmic side of the membrane. Residue K193 participates in ATP binding. A phosphoserine; by autocatalysis mark is found at S202 and S204. E214 contacts Mg(2+). T305 bears the Phosphothreonine; by autocatalysis mark. The Proton acceptor role is filled by D334. Mg(2+) is bound by residues N339 and D357.

Belongs to the protein kinase superfamily. Ser/Thr protein kinase family. It depends on Mg(2+) as a cofactor. In terms of processing, proteolytically cleaved. In healthy cells, the precursor is continuously imported into mitochondria where it is proteolytically cleaved into its short form by the mitochondrial rhomboid protease rho-7 (8231301). The short form is then released into the cytosol where it rapidly undergoes proteasome-dependent degradation. In unhealthy cells, when cellular stress conditions lead to the loss of mitochondrial membrane potential, mitochondrial import is impaired leading to the precursor accumulating on the outer mitochondrial membrane (OMM). Autophosphorylated. Autophosphorylated on Ser-202, which activates kinase activity. Loss of mitochondrial membrane potential results in the precursor accumulating on the outer mitochondrial membrane (OMM) where it is activated by autophosphorylation at Ser-202. Autophosphorylation is sufficient and essential for selective recruitment of park to depolarized mitochondria, likely via Pink1-dependent phosphorylation of polyubiquitin chains. Also autophosphorylated at Ser-204 and Thr-305.

It localises to the mitochondrion outer membrane. The protein resides in the mitochondrion inner membrane. Its subcellular location is the cytoplasm. The protein localises to the cytosol. The catalysed reaction is L-seryl-[protein] + ATP = O-phospho-L-seryl-[protein] + ADP + H(+). The enzyme catalyses L-threonyl-[protein] + ATP = O-phospho-L-threonyl-[protein] + ADP + H(+). In terms of biological role, acts as a serine/threonine-protein kinase. Exhibits a substrate preference for proline at position P+1 and a general preference at several residues for basic residues such as arginine. Also exhibits moderate preferences for a phosphotyrosine at position P-3 and a tryptophan at P-5. Critical to mitochondrial homeostasis it mediates several pathways that maintain mitochondrial health and function Protects against mitochondrial dysfunction during cellular stress by phosphorylating mitochondrial proteins such as park and likely Drp1, to coordinate mitochondrial quality control mechanisms that remove and replace dysfunctional mitochondrial components. Depending on the severity of mitochondrial damage and/or dysfunction, activity ranges from preventing apoptosis and stimulating mitochondrial biogenesis to regulating mitochondrial dynamics and eliminating severely damaged mitochondria via mitophagy. Appears to be particularly important in maintaining the physiology and function of cells with high energy demands that are undergoing stress or altered metabolic environment, including spermatids, muscle cells and neurons such as the dopaminergic (DA) neurons. Mediates the translocation and activation of park at the outer membrane (OMM) of dysfunctional/depolarized mitochondria. At the OMM of damaged mitochondria, phosphorylates pre-existing polyubiquitin chains, the Pink1-phosphorylated polyubiquitin then recruits park from the cytosol to the OMM where park is fully activated by phosphorylation at 'Ser-94' by Pink1. When cellular stress results in irreversible mitochondrial damage, functions with park to promote the clearance of dysfunctional and/or depolarized mitochondria by selective autophagy (mitophagy). The Pink1-park pathway also promotes fission and/or inhibits fusion of damaged mitochondria, by phosphorylating and thus promoting the park-dependent degradation of proteins involved in mitochondrial fusion/fission such as Marf, Opa1 and fzo. This prevents the refusion of unhealthy mitochondria with the mitochondrial network or initiates mitochondrial fragmentation facilitating their later engulfment by autophagosomes. Also likely to promote mitochondrial fission independently of park and Atg7-mediated mitophagy, via the phosphorylation and activation of Drp1. Regulates motility of damaged mitochondria by phosphorylating Miro which likely promotes its park-dependent degradation by the proteasome; in motor neurons, this inhibits mitochondrial intracellular anterograde transport along the axons which probably increases the chance of the mitochondria being eliminated in the soma. The Pink1-park pathway is also involved in mitochondrial regeneration processes such as promoting mitochondrial biogenesis, activating localized mitochondrial repair, promoting selective turnover of mitochondrial proteins and initiating the mitochondrial import of endogenous proteins. Involved in mitochondrial biogenesis by promoting the park-dependent ubiquitination of transcriptional repressor Paris which leads to its subsequent proteasomal degradation and allows activation of the transcription factor srl. Functions with park to promote localized mitochondrial repair by activating the translation of specific nuclear-encoded mitochondrial RNAs (nc-mtRNAs) on the mitochondrial surface, including several key electron transport chain component nc-mtRNAs. During oogenesis, phosphorylates and inactivates larp on the membrane of defective mitochondria, thus impairing local translation and mtDNA replication and consequently, reducing transmission of deleterious mtDNA mutations to the mature oocyte. Phosphorylates the mitochondrial acyl-CoA dehydrogenase Mcad, and appears to be important for maintaining fatty acid and amino acid metabolism via a mechanism that is independent of it's role in maintaining production of ATP. This is Serine/threonine-protein kinase Pink1, mitochondrial from Pediculus humanus subsp. corporis (Body louse).